The following is a 513-amino-acid chain: Maturase K (513 aa).

The protein belongs to the intron maturase 2 family. MatK subfamily.

Its subcellular location is the plastid. It is found in the chloroplast. Its function is as follows. Usually encoded in the trnK tRNA gene intron. Probably assists in splicing its own and other chloroplast group II introns. The sequence is that of Maturase K from Keckiella cordifolia (Heart-leafed penstemon).